The following is a 465-amino-acid chain: A-type ATP synthase subunit B (465 aa).

This sequence belongs to the ATPase alpha/beta chains family. The A-type ATPase is composed of subunits A(3), B(3), C, D, E(1 or 2), F, H(2), I and proteolipid K(x).

The protein localises to the cell membrane. Its function is as follows. Component of the A-type ATP synthase that produces ATP from ADP in the presence of a proton gradient across the membrane. The B chain is a regulatory subunit. This Methanocaldococcus jannaschii (strain ATCC 43067 / DSM 2661 / JAL-1 / JCM 10045 / NBRC 100440) (Methanococcus jannaschii) protein is A-type ATP synthase subunit B.